The following is a 328-amino-acid chain: Alanine racemase (328 aa).

Residue lysine 33 is the Proton acceptor; specific for D-alanine of the active site. N6-(pyridoxal phosphate)lysine is present on lysine 33. Arginine 118 contributes to the substrate binding site. Tyrosine 237 (proton acceptor; specific for L-alanine) is an active-site residue. Substrate is bound at residue methionine 283.

Belongs to the alanine racemase family. Requires pyridoxal 5'-phosphate as cofactor.

It carries out the reaction L-alanine = D-alanine. It functions in the pathway amino-acid biosynthesis; D-alanine biosynthesis; D-alanine from L-alanine: step 1/1. Its function is as follows. Catalyzes the interconversion of L-alanine and D-alanine. May also act on other amino acids. The polypeptide is Alanine racemase (alr) (Campylobacter jejuni (strain RM1221)).